The chain runs to 209 residues: Uracil phosphoribosyltransferase (209 aa).

5-phospho-alpha-D-ribose 1-diphosphate contacts are provided by residues Arg79, Arg104, and 131–139 (DPMLATGAS). Uracil is bound by residues Ile194 and 199 to 201 (GDA). Asp200 contacts 5-phospho-alpha-D-ribose 1-diphosphate.

It belongs to the UPRTase family. It depends on Mg(2+) as a cofactor.

The catalysed reaction is UMP + diphosphate = 5-phospho-alpha-D-ribose 1-diphosphate + uracil. It participates in pyrimidine metabolism; UMP biosynthesis via salvage pathway; UMP from uracil: step 1/1. With respect to regulation, allosterically activated by GTP. Its function is as follows. Catalyzes the conversion of uracil and 5-phospho-alpha-D-ribose 1-diphosphate (PRPP) to UMP and diphosphate. In Staphylococcus carnosus (strain TM300), this protein is Uracil phosphoribosyltransferase.